The chain runs to 334 residues: tRNA-dihydrouridine(20/20a) synthase (334 aa).

FMN-binding positions include proline 18–methionine 20 and glutamine 71. Residue cysteine 101 is the Proton donor of the active site. Residues lysine 140, histidine 172, asparagine 212–glycine 214, and glycine 234–arginine 235 each bind FMN.

Belongs to the Dus family. DusA subfamily. The cofactor is FMN.

The catalysed reaction is 5,6-dihydrouridine(20) in tRNA + NADP(+) = uridine(20) in tRNA + NADPH + H(+). The enzyme catalyses 5,6-dihydrouridine(20) in tRNA + NAD(+) = uridine(20) in tRNA + NADH + H(+). It carries out the reaction 5,6-dihydrouridine(20a) in tRNA + NADP(+) = uridine(20a) in tRNA + NADPH + H(+). It catalyses the reaction 5,6-dihydrouridine(20a) in tRNA + NAD(+) = uridine(20a) in tRNA + NADH + H(+). In terms of biological role, catalyzes the synthesis of 5,6-dihydrouridine (D), a modified base found in the D-loop of most tRNAs, via the reduction of the C5-C6 double bond in target uridines. Specifically modifies U20 and U20a in tRNAs. The polypeptide is tRNA-dihydrouridine(20/20a) synthase (Xanthomonas axonopodis pv. citri (strain 306)).